The following is a 427-amino-acid chain: Serine--tRNA ligase (427 aa).

Residue 236–238 (TAE) coordinates L-serine. 267 to 269 (RRE) contacts ATP. An L-serine-binding site is contributed by Glu-290. 354-357 (EISS) serves as a coordination point for ATP. Ser-390 provides a ligand contact to L-serine.

It belongs to the class-II aminoacyl-tRNA synthetase family. Type-1 seryl-tRNA synthetase subfamily. In terms of assembly, homodimer. The tRNA molecule binds across the dimer.

It localises to the cytoplasm. The enzyme catalyses tRNA(Ser) + L-serine + ATP = L-seryl-tRNA(Ser) + AMP + diphosphate + H(+). The catalysed reaction is tRNA(Sec) + L-serine + ATP = L-seryl-tRNA(Sec) + AMP + diphosphate + H(+). Its pathway is aminoacyl-tRNA biosynthesis; selenocysteinyl-tRNA(Sec) biosynthesis; L-seryl-tRNA(Sec) from L-serine and tRNA(Sec): step 1/1. Catalyzes the attachment of serine to tRNA(Ser). Is also able to aminoacylate tRNA(Sec) with serine, to form the misacylated tRNA L-seryl-tRNA(Sec), which will be further converted into selenocysteinyl-tRNA(Sec). The chain is Serine--tRNA ligase from Rippkaea orientalis (strain PCC 8801 / RF-1) (Cyanothece sp. (strain PCC 8801)).